The following is a 379-amino-acid chain: MSAIRYELIKTDKQTGARLGKIHTPHGTFDTPMFMPVGTLATVKTMSPEELKAMGAGIILSNTYHLWLRPGEELIREAGGLHKFMNWDQPILTDSGGFQVFSLSKMRDIKEEGVHFRNHLNGDKLFLSPEKAIQIQNALGSDIMMSFDECPPYPASHEYMKKSVERTSRWAERGLQAHARPEDQGLFGIVQGGAYEDLRAQSAKDLVSLDFPGYSIGGLSVGEPKDVMNRVLEHTTPLLPANKPRYLMGVGSPDSLIDGVIRGVDMFDCVLPTRIARNGTCMTSSGRLVIKNAKFTHDFRPIDENCDCYTCKNYSRAYIRHLIRCEETFGIRLTTYHNLHFLLNLMKQVRSAIMEDRLADFREEFFEQYGFNRPDAKNF.

The active-site Proton acceptor is the Asp-94. Substrate contacts are provided by residues 94-98 (DSGGF), Asp-148, Gln-191, and Gly-218. An RNA binding region spans residues 249–255 (GVGSPDS). Asp-268 (nucleophile) is an active-site residue. An RNA binding; important for wobble base 34 recognition region spans residues 273 to 277 (TRIAR). 4 residues coordinate Zn(2+): Cys-306, Cys-308, Cys-311, and His-337.

This sequence belongs to the queuine tRNA-ribosyltransferase family. As to quaternary structure, homodimer. Within each dimer, one monomer is responsible for RNA recognition and catalysis, while the other monomer binds to the replacement base PreQ1. Zn(2+) is required as a cofactor.

It catalyses the reaction 7-aminomethyl-7-carbaguanine + guanosine(34) in tRNA = 7-aminomethyl-7-carbaguanosine(34) in tRNA + guanine. The protein operates within tRNA modification; tRNA-queuosine biosynthesis. Catalyzes the base-exchange of a guanine (G) residue with the queuine precursor 7-aminomethyl-7-deazaguanine (PreQ1) at position 34 (anticodon wobble position) in tRNAs with GU(N) anticodons (tRNA-Asp, -Asn, -His and -Tyr). Catalysis occurs through a double-displacement mechanism. The nucleophile active site attacks the C1' of nucleotide 34 to detach the guanine base from the RNA, forming a covalent enzyme-RNA intermediate. The proton acceptor active site deprotonates the incoming PreQ1, allowing a nucleophilic attack on the C1' of the ribose to form the product. After dissociation, two additional enzymatic reactions on the tRNA convert PreQ1 to queuine (Q), resulting in the hypermodified nucleoside queuosine (7-(((4,5-cis-dihydroxy-2-cyclopenten-1-yl)amino)methyl)-7-deazaguanosine). The polypeptide is Queuine tRNA-ribosyltransferase (Listeria welshimeri serovar 6b (strain ATCC 35897 / DSM 20650 / CCUG 15529 / CIP 8149 / NCTC 11857 / SLCC 5334 / V8)).